Reading from the N-terminus, the 276-residue chain is Zinc transporter ZTP29 (276 aa).

Over 1-6 (MDSQML) the chain is Cytoplasmic. Residues 7 to 27 (VALGLSLVGGLSTSLGALFVV) traverse the membrane as a helical segment. Over 28–35 (LSETPNMK) the chain is Lumenal. A helical membrane pass occupies residues 36–56 (MLGLLQGFASGLMLSISFLDL). At 57-63 (AHNAINS) the chain is on the cytoplasmic side. The chain crosses the membrane as a helical span at residues 64–84 (IGFFKANLWFFGGVIFFACIT). Over 85 to 123 (KFIPEPTLGPSTDGKRRKKNGDEGGKDMMKKHRKQVLYS) the chain is Lumenal. The chain crosses the membrane as a helical span at residues 124 to 144 (GLITAIGISLHNFPEGMAVFL). Residues 145–156 (GSIKGMRVGVNL) are Cytoplasmic-facing. The chain crosses the membrane as a helical span at residues 157–177 (ALAIALHNIPEGVAVALPIYF). The Lumenal portion of the chain corresponds to 178 to 187 (ATESKWQAFK). The chain crosses the membrane as a helical span at residues 188–208 (LATLSGLAEPLGVIIVAYLFP). Residues 209–219 (RSLSPEILEGL) are Cytoplasmic-facing. The chain crosses the membrane as a helical span at residues 220–240 (LGAVGGIMAFLTLHEMLPLAF). The Lumenal portion of the chain corresponds to 241–250 (DYAGQKQAVK). The chain crosses the membrane as a helical span at residues 251–271 (AVFFGMACMSASLYFLELSLP). Residues 272–276 (ETMSL) are Cytoplasmic-facing.

This sequence belongs to the ZIP transporter (TC 2.A.5) family. ZupT subfamily. As to expression, expressed in hypocotyls, cotyledons, leaves and anthers.

It localises to the endoplasmic reticulum membrane. Functionally, zinc transporter involved response to salt stress. May act through the regulation of zinc levels required to induce the unfolded protein response (UPR) pathway. This Arabidopsis thaliana (Mouse-ear cress) protein is Zinc transporter ZTP29 (ZTP29).